We begin with the raw amino-acid sequence, 332 residues long: Ferredoxin--NADP reductase (332 aa).

Glutamate 35, glutamine 43, tyrosine 48, valine 88, phenylalanine 122, aspartate 286, and serine 326 together coordinate FAD.

This sequence belongs to the ferredoxin--NADP reductase type 2 family. In terms of assembly, homodimer. FAD is required as a cofactor.

It catalyses the reaction 2 reduced [2Fe-2S]-[ferredoxin] + NADP(+) + H(+) = 2 oxidized [2Fe-2S]-[ferredoxin] + NADPH. This is Ferredoxin--NADP reductase from Limosilactobacillus reuteri (strain DSM 20016) (Lactobacillus reuteri).